We begin with the raw amino-acid sequence, 664 residues long: Probable L-type lectin-domain containing receptor kinase V.3 (664 aa).

The N-terminal stretch at 1-26 is a signal peptide; the sequence is MSMSCKINWLMVLVIIALSNLESSLG. The Extracellular portion of the chain corresponds to 27–278; that stretch reads RLVFEGSAGL…YPKAESQVKL (252 aa). The tract at residues 28 to 250 is legume-lectin like; it reads LVFEGSAGLM…AIHYMWMWYV (223 aa). Residues Asn69, Asn116, Asn122, Asn174, and Asn197 are each glycosylated (N-linked (GlcNAc...) asparagine). Residues 279-299 form a helical membrane-spanning segment; that stretch reads IVLVTFLTLALFVALAASALI. The Cytoplasmic segment spans residues 300 to 664; sequence VFFYKRHKKL…LPSGRPRLFL (365 aa). Residues 335–617 enclose the Protein kinase domain; that stretch reads NGFKQLLGEG…GVSELPDNLL (283 aa). Residues 341-349 and Lys364 contribute to the ATP site; that span reads LGEGGFGPV. Catalysis depends on Asp461, which acts as the Proton acceptor.

It in the C-terminal section; belongs to the protein kinase superfamily. Ser/Thr protein kinase family. In the N-terminal section; belongs to the leguminous lectin family.

The protein resides in the cell membrane. The enzyme catalyses L-seryl-[protein] + ATP = O-phospho-L-seryl-[protein] + ADP + H(+). The catalysed reaction is L-threonyl-[protein] + ATP = O-phospho-L-threonyl-[protein] + ADP + H(+). The protein is Probable L-type lectin-domain containing receptor kinase V.3 (LECRK53) of Arabidopsis thaliana (Mouse-ear cress).